A 241-amino-acid polypeptide reads, in one-letter code: MKHVLVIDDDVAMRHLIVEYLTIHAFKVTAVADSKQFNRVLSSETVDVAVVDLNLGREDGLEIVRTLATKSDVPMIIISGDRLEEADKVVALELGATDFIAKPFGTREFLARIRVALRERPSVARTKDRRSFYFADWTLNIRQRRLISEEGGEIKLTAGEFNLLVAFLEKPRDVLSREQLLIASRVREEEVYDRSIDVLIFRLRRKLEGDPTSPQLIKTARGAGYFFDADVNVSYGGMMAA.

A Response regulatory domain is found at 3-117 (HVLVIDDDVA…EFLARIRVAL (115 aa)). At aspartate 52 the chain carries 4-aspartylphosphate. Residues 129–229 (RRSFYFADWT…ARGAGYFFDA (101 aa)) constitute a DNA-binding region (ompR/PhoB-type).

Post-translationally, phosphorylated by wide host range (WHR) VirA protein.

The protein localises to the cytoplasm. VirG is required for the positive regulation of at least two vir loci encoded by the Ri plasmid of A.rhizogenes. In Rhizobium rhizogenes (Agrobacterium rhizogenes), this protein is Regulatory protein VirG (virG).